A 141-amino-acid chain; its full sequence is Large ribosomal subunit protein uL11 (141 aa).

The protein belongs to the universal ribosomal protein uL11 family. Part of the ribosomal stalk of the 50S ribosomal subunit. Interacts with L10 and the large rRNA to form the base of the stalk. L10 forms an elongated spine to which L12 dimers bind in a sequential fashion forming a multimeric L10(L12)X complex. In terms of processing, one or more lysine residues are methylated.

Its function is as follows. Forms part of the ribosomal stalk which helps the ribosome interact with GTP-bound translation factors. In Brevibacillus brevis (strain 47 / JCM 6285 / NBRC 100599), this protein is Large ribosomal subunit protein uL11.